The sequence spans 621 residues: uncharacterized protein (621 aa).

It localises to the plastid. The protein resides in the chloroplast. This is an uncharacterized protein from Porphyra purpurea (Red seaweed).